The sequence spans 954 residues: Glycine dehydrogenase (decarboxylating) (954 aa).

K704 is modified (N6-(pyridoxal phosphate)lysine).

The protein belongs to the GcvP family. As to quaternary structure, the glycine cleavage system is composed of four proteins: P, T, L and H. Requires pyridoxal 5'-phosphate as cofactor.

The enzyme catalyses N(6)-[(R)-lipoyl]-L-lysyl-[glycine-cleavage complex H protein] + glycine + H(+) = N(6)-[(R)-S(8)-aminomethyldihydrolipoyl]-L-lysyl-[glycine-cleavage complex H protein] + CO2. Its function is as follows. The glycine cleavage system catalyzes the degradation of glycine. The P protein binds the alpha-amino group of glycine through its pyridoxal phosphate cofactor; CO(2) is released and the remaining methylamine moiety is then transferred to the lipoamide cofactor of the H protein. The chain is Glycine dehydrogenase (decarboxylating) from Vibrio vulnificus (strain YJ016).